We begin with the raw amino-acid sequence, 216 residues long: Protein-L-isoaspartate O-methyltransferase (216 aa).

Serine 66 is a catalytic residue.

It belongs to the methyltransferase superfamily. L-isoaspartyl/D-aspartyl protein methyltransferase family.

It localises to the cytoplasm. It carries out the reaction [protein]-L-isoaspartate + S-adenosyl-L-methionine = [protein]-L-isoaspartate alpha-methyl ester + S-adenosyl-L-homocysteine. Catalyzes the methyl esterification of L-isoaspartyl residues in peptides and proteins that result from spontaneous decomposition of normal L-aspartyl and L-asparaginyl residues. It plays a role in the repair and/or degradation of damaged proteins. The polypeptide is Protein-L-isoaspartate O-methyltransferase (Colwellia psychrerythraea (strain 34H / ATCC BAA-681) (Vibrio psychroerythus)).